The chain runs to 397 residues: Serpin-Z7 (397 aa).

The residue at position 2 (alanine 2) is an N-acetylalanine. The interval 344–368 (GTKAGAATGDVIVDRSLPIRMDFVA) is RCL.

Belongs to the serpin family. As to expression, highly expressed in endosperm, at intermediate level in embryo and at lower levels in roots.

Functionally, inhibits chymotrypsin in vitro. This is Serpin-Z7 (PAZ7) from Hordeum vulgare (Barley).